Reading from the N-terminus, the 635-residue chain is Extracellular metalloproteinase 1 (635 aa).

Positions 1–19 (MHGLLLAAGLLSLPLHVLA) are cleaved as a signal peptide. A propeptide spanning residues 20–246 (HPQPSTSTSL…VHNVVDYVAH (227 aa)) is cleaved from the precursor. N-linked (GlcNAc...) asparagine glycosylation occurs at N287. H430 lines the Zn(2+) pocket. Residue E431 is part of the active site. H434 lines the Zn(2+) pocket. N-linked (GlcNAc...) asparagine glycans are attached at residues N475, N594, and N623.

The protein belongs to the peptidase M36 family. Zn(2+) serves as cofactor.

It is found in the secreted. Functionally, secreted metalloproteinase probably acting as a virulence factor. This Arthroderma benhamiae (Trichophyton mentagrophytes) protein is Extracellular metalloproteinase 1 (MEP1).